A 427-amino-acid polypeptide reads, in one-letter code: Thyroid hormone receptor alpha-A (427 aa).

The segment covering 1–11 (MENTEQEHNLP) has biased composition (basic and acidic residues). A disordered region spans residues 1 to 40 (MENTEQEHNLPEGDETQWPNGVKRKRKNSQCSMNSTSDKS). The interval 1–56 (MENTEQEHNLPEGDETQWPNGVKRKRKNSQCSMNSTSDKSISVPGYVPSYLEKDEP) is modulating. Over residues 29-40 (SQCSMNSTSDKS) the composition is skewed to polar residues. NR C4-type zinc fingers lie at residues 57 to 77 (CVVCGDKATGYHYRCITCEGC) and 95 to 119 (CKYDSCCIIDKITRNQCQLCRFRKC). A DNA-binding region (nuclear receptor) is located at residues 57–131 (CVVCGDKATG…VGMAMDLVLD (75 aa)). The NR LBD domain maps to 167 to 410 (SEWELIRMVT…PPLFLEVFED (244 aa)).

Belongs to the nuclear hormone receptor family. NR1 subfamily. In terms of assembly, interacts with ncoa2. In terms of tissue distribution, after the mid-blastula transition (MBT), expressed throughout the deep cells, which give rise to the embryo proper. In adults, isoform 2 shows highest expression in the eye and liver. Expressed in adult gonads.

It localises to the nucleus. Its function is as follows. High affinity receptor for triiodothyronine. In the absence of thyroid hormone during late blastula stage development, acts as a transcriptional repressor. Whereas in the presence of thyroid hormone, can act as an activator of transcription. In addition, represses retinoic acid (RA)-signaling during blastula and gastrula stages of development. The polypeptide is Thyroid hormone receptor alpha-A (thraa) (Danio rerio (Zebrafish)).